Consider the following 450-residue polypeptide: Bifunctional apoptosis regulator (450 aa).

Positions 1-20 are disordered; that stretch reads MEEPQKSYVNTMDLERDEPL. The Cytoplasmic portion of the chain corresponds to 1-140; it reads MEEPQKSYVN…PNTGRANQQM (140 aa). An RING-type zinc finger spans residues 34-74; that stretch reads CHCCYDILVNPTTLNCGHSFCRHCLALWWASSKKTECPECR. Residues 141–161 traverse the membrane as a helical segment; sequence GGGFFSGVLTALTGVAVVLLV. The Lumenal segment spans residues 162 to 331; it reads YHWSSRESEH…KEPTWKQWRE (170 aa). In terms of domain architecture, SAM spans 182 to 249; that stretch reads WTAEEVVLWL…LMELERVKAL (68 aa). Asparagine 232 carries N-linked (GlcNAc...) asparagine glycosylation. Residues 332–352 traverse the membrane as a helical segment; sequence FLVKYSFLPYQLIAEFAWDWL. At 353–360 the chain is on the cytoplasmic side; sequence EVHYWTSR. The helical transmembrane segment at 361 to 381 threads the bilayer; that stretch reads FLIINAMLLSVLELFSFWRIW. At 382-404 the chain is on the lumenal side; sequence SRSELKTVPQRMWSHFWKVSTQG. The helical transmembrane segment at 405–425 threads the bilayer; it reads LFVAMFWPLIPQFVCNCLFYW. The Cytoplasmic segment spans residues 426–450; the sequence is ALYFNPIINIDLVVKELRRLETQVL.

As to quaternary structure, interacts with CASP8, BCL2 and BCL2L1 through SAM domain and also with HIP1, IFT57, ESRRBL1 and BCAP31. Interacts with NGFR; this interaction inhibits NF-kappa-B and JNK-related signaling pathways. Mediates RING-dependent self-ubiquitination leading to proteasomal degradation. As to expression, expressed highly in brain, moderately in small intestine, weakly in testes and only faintly in liver and skeletal muscle. Not expressed in heart, kidney, lung and spleen.

It localises to the endoplasmic reticulum membrane. The catalysed reaction is S-ubiquitinyl-[E2 ubiquitin-conjugating enzyme]-L-cysteine + [acceptor protein]-L-lysine = [E2 ubiquitin-conjugating enzyme]-L-cysteine + N(6)-ubiquitinyl-[acceptor protein]-L-lysine.. Its function is as follows. Membrane-bound E3 ubiquitin ligase that plays a role in several processes including apoptosis regulation or reticulum endoplasmic stress. Has anti-apoptotic activity, both for apoptosis triggered via death-receptors and via mitochondrial factors. Contributes to the dynamic control of IRE1/ERN1 signaling during ER stress by inducing BAX inhibitor 1/TMBIM6 proteasomal degradation. Promotes the activation of TGF-beta signaling by mediating the 'Lys-63'-linked ubiquitination of TGFBR1 which is critical to activate the pathway. Together with NGFR, negatively regulates NF-kappa-B and JNK-related signaling pathways. Promotes the proteasome-mediated degradation of PNPLA3, a protein involveld in lipid metabolism. The sequence is that of Bifunctional apoptosis regulator (BFAR) from Homo sapiens (Human).